Consider the following 275-residue polypeptide: Probable endonuclease 4 (275 aa).

Histidine 66, histidine 106, glutamate 140, aspartate 172, histidine 175, histidine 209, aspartate 222, histidine 224, and glutamate 254 together coordinate Zn(2+).

Belongs to the AP endonuclease 2 family. Zn(2+) serves as cofactor.

The catalysed reaction is Endonucleolytic cleavage to 5'-phosphooligonucleotide end-products.. Endonuclease IV plays a role in DNA repair. It cleaves phosphodiester bonds at apurinic or apyrimidinic (AP) sites, generating a 3'-hydroxyl group and a 5'-terminal sugar phosphate. This Halobacterium salinarum (strain ATCC 29341 / DSM 671 / R1) protein is Probable endonuclease 4.